The primary structure comprises 342 residues: Holliday junction branch migration complex subunit RuvB (342 aa).

Residues 1-185 form a large ATPase domain (RuvB-L) region; that stretch reads MTVKPLRDVT…FPIQERLEYY (185 aa). Residues Leu-24, Arg-25, Gly-66, Lys-69, Thr-70, Ser-71, 132–134, Arg-175, Tyr-185, and Arg-222 each bind ATP; that span reads EDY. Thr-70 contributes to the Mg(2+) binding site. The interval 186-256 is small ATPAse domain (RuvB-S); it reads GPAELKEIAV…VVDRTLRRLE (71 aa). The tract at residues 259–342 is head domain (RuvB-H); it reads ARGLDAMDRR…RSGGKQGSLV (84 aa). Arg-314 and Arg-319 together coordinate DNA.

It belongs to the RuvB family. In terms of assembly, homohexamer. Forms an RuvA(8)-RuvB(12)-Holliday junction (HJ) complex. HJ DNA is sandwiched between 2 RuvA tetramers; dsDNA enters through RuvA and exits via RuvB. An RuvB hexamer assembles on each DNA strand where it exits the tetramer. Each RuvB hexamer is contacted by two RuvA subunits (via domain III) on 2 adjacent RuvB subunits; this complex drives branch migration. In the full resolvosome a probable DNA-RuvA(4)-RuvB(12)-RuvC(2) complex forms which resolves the HJ.

The protein resides in the cytoplasm. The catalysed reaction is ATP + H2O = ADP + phosphate + H(+). The RuvA-RuvB-RuvC complex processes Holliday junction (HJ) DNA during genetic recombination and DNA repair, while the RuvA-RuvB complex plays an important role in the rescue of blocked DNA replication forks via replication fork reversal (RFR). RuvA specifically binds to HJ cruciform DNA, conferring on it an open structure. The RuvB hexamer acts as an ATP-dependent pump, pulling dsDNA into and through the RuvAB complex. RuvB forms 2 homohexamers on either side of HJ DNA bound by 1 or 2 RuvA tetramers; 4 subunits per hexamer contact DNA at a time. Coordinated motions by a converter formed by DNA-disengaged RuvB subunits stimulates ATP hydrolysis and nucleotide exchange. Immobilization of the converter enables RuvB to convert the ATP-contained energy into a lever motion, pulling 2 nucleotides of DNA out of the RuvA tetramer per ATP hydrolyzed, thus driving DNA branch migration. The RuvB motors rotate together with the DNA substrate, which together with the progressing nucleotide cycle form the mechanistic basis for DNA recombination by continuous HJ branch migration. Branch migration allows RuvC to scan DNA until it finds its consensus sequence, where it cleaves and resolves cruciform DNA. This Anaeromyxobacter dehalogenans (strain 2CP-C) protein is Holliday junction branch migration complex subunit RuvB.